Reading from the N-terminus, the 963-residue chain is Glycine dehydrogenase (decarboxylating) (963 aa).

Position 707 is an N6-(pyridoxal phosphate)lysine (Lys-707).

It belongs to the GcvP family. The glycine cleavage system is composed of four proteins: P, T, L and H. It depends on pyridoxal 5'-phosphate as a cofactor.

The catalysed reaction is N(6)-[(R)-lipoyl]-L-lysyl-[glycine-cleavage complex H protein] + glycine + H(+) = N(6)-[(R)-S(8)-aminomethyldihydrolipoyl]-L-lysyl-[glycine-cleavage complex H protein] + CO2. The glycine cleavage system catalyzes the degradation of glycine. The P protein binds the alpha-amino group of glycine through its pyridoxal phosphate cofactor; CO(2) is released and the remaining methylamine moiety is then transferred to the lipoamide cofactor of the H protein. The chain is Glycine dehydrogenase (decarboxylating) from Dechloromonas aromatica (strain RCB).